The following is a 255-amino-acid chain: Hydroxyacylglutathione hydrolase (255 aa).

Residues H53, H55, D57, H58, H110, D127, and H165 each coordinate Zn(2+).

This sequence belongs to the metallo-beta-lactamase superfamily. Glyoxalase II family. As to quaternary structure, monomer. Zn(2+) serves as cofactor.

It carries out the reaction an S-(2-hydroxyacyl)glutathione + H2O = a 2-hydroxy carboxylate + glutathione + H(+). The protein operates within secondary metabolite metabolism; methylglyoxal degradation; (R)-lactate from methylglyoxal: step 2/2. Its function is as follows. Thiolesterase that catalyzes the hydrolysis of S-D-lactoyl-glutathione to form glutathione and D-lactic acid. This Xanthomonas axonopodis pv. citri (strain 306) protein is Hydroxyacylglutathione hydrolase.